Here is a 441-residue protein sequence, read N- to C-terminus: GTPase Der (441 aa).

EngA-type G domains lie at 4 to 169 (PIVA…PEGS) and 178 to 353 (PKVA…DAQT). GTP contacts are provided by residues 10–17 (GRPNVGKS), 57–61 (DTGGI), 120–123 (NKVD), 184–191 (GKPNVGKS), 231–235 (DTAGL), and 296–299 (NKWD). In terms of domain architecture, KH-like spans 354 to 438 (MRIPTGVLNE…SIRFINRERK (85 aa)).

This sequence belongs to the TRAFAC class TrmE-Era-EngA-EngB-Septin-like GTPase superfamily. EngA (Der) GTPase family. Associates with the 50S ribosomal subunit.

GTPase that plays an essential role in the late steps of ribosome biogenesis. The chain is GTPase Der from Lachnospira eligens (strain ATCC 27750 / DSM 3376 / VPI C15-48 / C15-B4) (Eubacterium eligens).